The primary structure comprises 337 residues: UDP-3-O-acylglucosamine N-acyltransferase 1 (337 aa).

Catalysis depends on H238, which acts as the Proton acceptor.

It belongs to the transferase hexapeptide repeat family. LpxD subfamily. In terms of assembly, homotrimer.

It carries out the reaction a UDP-3-O-[(3R)-3-hydroxyacyl]-alpha-D-glucosamine + a (3R)-hydroxyacyl-[ACP] = a UDP-2-N,3-O-bis[(3R)-3-hydroxyacyl]-alpha-D-glucosamine + holo-[ACP] + H(+). It participates in bacterial outer membrane biogenesis; LPS lipid A biosynthesis. Catalyzes the N-acylation of UDP-3-O-acylglucosamine using 3-hydroxyacyl-ACP as the acyl donor. Is involved in the biosynthesis of lipid A, a phosphorylated glycolipid that anchors the lipopolysaccharide to the outer membrane of the cell. The sequence is that of UDP-3-O-acylglucosamine N-acyltransferase 1 from Koribacter versatilis (strain Ellin345).